Here is a 412-residue protein sequence, read N- to C-terminus: Serine hydroxymethyltransferase (412 aa).

Residues Leu-117 and 121–123 (GHL) contribute to the (6S)-5,6,7,8-tetrahydrofolate site. N6-(pyridoxal phosphate)lysine is present on Lys-226. (6S)-5,6,7,8-tetrahydrofolate is bound at residue 349 to 351 (SPF).

The protein belongs to the SHMT family. As to quaternary structure, homodimer. Requires pyridoxal 5'-phosphate as cofactor.

The protein localises to the cytoplasm. It carries out the reaction (6R)-5,10-methylene-5,6,7,8-tetrahydrofolate + glycine + H2O = (6S)-5,6,7,8-tetrahydrofolate + L-serine. Its pathway is one-carbon metabolism; tetrahydrofolate interconversion. The protein operates within amino-acid biosynthesis; glycine biosynthesis; glycine from L-serine: step 1/1. In terms of biological role, catalyzes the reversible interconversion of serine and glycine with tetrahydrofolate (THF) serving as the one-carbon carrier. This reaction serves as the major source of one-carbon groups required for the biosynthesis of purines, thymidylate, methionine, and other important biomolecules. Also exhibits THF-independent aldolase activity toward beta-hydroxyamino acids, producing glycine and aldehydes, via a retro-aldol mechanism. The protein is Serine hydroxymethyltransferase of Geobacillus kaustophilus (strain HTA426).